We begin with the raw amino-acid sequence, 262 residues long: Pyridoxine 5'-phosphate synthase (262 aa).

Asn6 provides a ligand contact to 3-amino-2-oxopropyl phosphate. 8–9 lines the 1-deoxy-D-xylulose 5-phosphate pocket; that stretch reads DH. Arg17 lines the 3-amino-2-oxopropyl phosphate pocket. The Proton acceptor role is filled by His43. Residues Arg45 and His50 each contribute to the 1-deoxy-D-xylulose 5-phosphate site. Glu70 (proton acceptor) is an active-site residue. Position 102 (Thr102) interacts with 1-deoxy-D-xylulose 5-phosphate. The Proton donor role is filled by His215. Residues Gly216 and 237 to 238 each bind 3-amino-2-oxopropyl phosphate; that span reads GH.

It belongs to the PNP synthase family. In terms of assembly, homooctamer; tetramer of dimers.

The protein resides in the cytoplasm. The enzyme catalyses 3-amino-2-oxopropyl phosphate + 1-deoxy-D-xylulose 5-phosphate = pyridoxine 5'-phosphate + phosphate + 2 H2O + H(+). It functions in the pathway cofactor biosynthesis; pyridoxine 5'-phosphate biosynthesis; pyridoxine 5'-phosphate from D-erythrose 4-phosphate: step 5/5. Functionally, catalyzes the complicated ring closure reaction between the two acyclic compounds 1-deoxy-D-xylulose-5-phosphate (DXP) and 3-amino-2-oxopropyl phosphate (1-amino-acetone-3-phosphate or AAP) to form pyridoxine 5'-phosphate (PNP) and inorganic phosphate. In Helicobacter pylori (strain ATCC 700392 / 26695) (Campylobacter pylori), this protein is Pyridoxine 5'-phosphate synthase.